The sequence spans 119 residues: Large ribosomal subunit protein uL18 (119 aa).

Belongs to the universal ribosomal protein uL18 family. As to quaternary structure, part of the 50S ribosomal subunit; part of the 5S rRNA/L5/L18/L25 subcomplex. Contacts the 5S and 23S rRNAs.

Functionally, this is one of the proteins that bind and probably mediate the attachment of the 5S RNA into the large ribosomal subunit, where it forms part of the central protuberance. The sequence is that of Large ribosomal subunit protein uL18 from Xanthomonas campestris pv. campestris (strain 8004).